We begin with the raw amino-acid sequence, 205 residues long: MSNAEAQASSDHTAPGKADTAPAHNPEADRLRALLEPSVLANRLYLEDVVINVAGSHRVVHVVVDLPQEETGGVSLDVIADISKVLSDALDNDPGADTRPYDLEVSSPGVGRPLTEPRHWHRAKGRIATVKVIQGENVTGRIQSVDDGGVTLVPEIAVKKGMKPKQGDPVKLPFDRIRTGKVEIEFSHLSEDGLEPEHNGPSEEA.

The span at Met-1–His-12 shows a compositional bias: polar residues. Disordered regions lie at residues Met-1–His-24 and Phe-186–Ala-205.

Belongs to the RimP family.

The protein localises to the cytoplasm. In terms of biological role, required for maturation of 30S ribosomal subunits. This Pseudarthrobacter chlorophenolicus (strain ATCC 700700 / DSM 12829 / CIP 107037 / JCM 12360 / KCTC 9906 / NCIMB 13794 / A6) (Arthrobacter chlorophenolicus) protein is Ribosome maturation factor RimP.